We begin with the raw amino-acid sequence, 244 residues long: Lipoprotein-releasing system ATP-binding protein LolD (244 aa).

Positions 19 to 244 (IRAEALAKTY…KLRELAPSAV (226 aa)) constitute an ABC transporter domain. 55–62 (GASGAGKS) is a binding site for ATP.

It belongs to the ABC transporter superfamily. Lipoprotein translocase (TC 3.A.1.125) family. As to quaternary structure, the complex is composed of two ATP-binding proteins (LolD) and two transmembrane proteins (LolC and LolE).

It localises to the cell inner membrane. Part of the ABC transporter complex LolCDE involved in the translocation of mature outer membrane-directed lipoproteins, from the inner membrane to the periplasmic chaperone, LolA. Responsible for the formation of the LolA-lipoprotein complex in an ATP-dependent manner. The sequence is that of Lipoprotein-releasing system ATP-binding protein LolD from Xanthomonas axonopodis pv. citri (strain 306).